We begin with the raw amino-acid sequence, 334 residues long: Cobalt-precorrin-5B C(1)-methyltransferase (334 aa).

It belongs to the CbiD family.

The enzyme catalyses Co-precorrin-5B + S-adenosyl-L-methionine = Co-precorrin-6A + S-adenosyl-L-homocysteine. It functions in the pathway cofactor biosynthesis; adenosylcobalamin biosynthesis; cob(II)yrinate a,c-diamide from sirohydrochlorin (anaerobic route): step 6/10. In terms of biological role, catalyzes the methylation of C-1 in cobalt-precorrin-5B to form cobalt-precorrin-6A. This is Cobalt-precorrin-5B C(1)-methyltransferase from Methanoregula boonei (strain DSM 21154 / JCM 14090 / 6A8).